The following is a 262-amino-acid chain: Thrombin-like enzyme gyroxin B1.3 (262 aa).

The signal sequence occupies residues M1 to A18. Positions Q19–S262 are excised as a propeptide. The 229-residue stretch at V25 to A253 folds into the Peptidase S1 domain. Intrachain disulfides connect C31–C165, C52–C68, C102–C260, C144–C214, C176–C193, and C204–C229. H67 serves as the catalytic Charge relay system. An N-linked (GlcNAc...) asparagine glycan is attached at N105. Catalysis depends on D112, which acts as the Charge relay system. Catalysis depends on S208, which acts as the Charge relay system.

Belongs to the peptidase S1 family. Snake venom subfamily. Monomer. Expressed by the venom gland.

It is found in the secreted. In terms of biological role, thrombin-like snake venom serine protease. Displays a specificity similar to trypsin. Releases only fibrinopeptide A in the conversion of fibrinogen to fibrin. Reversibly increases the permeability of the blood brain barrier (BBB) in mice. Induces the barrel rotation syndrome in mice, which is manifested by gyroxin-like, rapid rolling motions. This syndrome may be due to its effect on BBB permeability, and certainly also to other actions affecting endogenous substrates present in the endothelium, nervous tissues or blood. Also shows a moderate inhibitory activity on the human voltage-gated potassium channel Kv10.1/KCNH1/EAG1 (58% current inhibition at 5 uM). It blocks Kv10.1/KCNH1/EAG1 in a time and dose-dependent manner and with a mechanism independent of its enzymatic activity. It may have a preference in interacting with Kv10.1/KCNH1/EAG1 in its closed state, since the inhibitory effect of the toxin is decreased at more depolarized potentials. The sequence is that of Thrombin-like enzyme gyroxin B1.3 from Crotalus durissus terrificus (South American rattlesnake).